Reading from the N-terminus, the 535-residue chain is Pyrichalasin C-18 hydroxylase (535 aa).

A helical transmembrane segment spans residues 42–62; that stretch reads LPSGTLIVLAALSLALLVAVL. N-linked (GlcNAc...) asparagine glycosylation is found at asparagine 139 and asparagine 222. Cysteine 479 lines the heme pocket.

It belongs to the cytochrome P450 family. Requires heme as cofactor.

It is found in the membrane. Its pathway is mycotoxin biosynthesis. In terms of biological role, cytochrome P450 monooxygenase; part of the gene cluster that mediates the biosynthesis of the mycotoxin pyrichalasin H, a tyrosine-derived cytochalasan that inhibits the growth of rice seedlings, but also inhibits lymphocyte capping and actin polymerization and alters cell morphology. Pyrichalasin H is indicated as the responsible agent for the genus-specific pathogenicity of M.grisea toward crabgrass. The first step in the pathway is catalyzed by the O-methyltransferase pyiA which methylates free tyrosine to generate the precursor O-methyltyrosine. The hybrid PKS-NRPS pyiS, assisted by the enoyl reductase pyiC, are responsible for fusion of the O-methyltyrosine precursor and the polyketide backbone. The polyketide synthase module (PKS) of pyiS is responsible for the synthesis of the polyketide backbone and the downstream nonribosomal peptide synthetase (NRPS) amidates the carboxyl end of the polyketide with the O-methyltyrosine precursor. As the NRPS A-domain demonstrates substrate tolerance, pyiS can also use phenylalanine, tyrosine and even para-chlorophenylalanine as amino acid precursor, which leads to the production of novel cytochalasans, including halogenated cytochalasans. Because pyiS lacks a designated enoylreductase (ER) domain, the required activity is provided the enoyl reductase pyiC. Reduction by the hydrolyase pyiE leads to 1,5-dihydropyrrolone, which is substrate for dehydration and intra-molecular Diels-Alder cyclization by the Diels-Alderase pyiF to yield the required isoindolone-fused macrocycle. The tailoring cytochrome P450 monooxygenases piyD and piyG catalyze the hydroxylation at C-18 and C-7, respectivily, whereas the short-chain dehydrogenase/reductase pyiH reduces the carbonyl at C-21 in preparation for the transfer of an acetyl group by the acetyltransferase pyiB. These 3 reactions whose order is not clear yet, lead to the production of O-methylpyrichalasin J, a deacetylated pyrichalasin H. Finally, pyiB to converts O-methylpyrichalasin J into the final product pyrichalasin H via acetylation of C-21. The protein is Pyrichalasin C-18 hydroxylase of Pyricularia grisea (Crabgrass-specific blast fungus).